Reading from the N-terminus, the 397-residue chain is Aromatic-amino-acid aminotransferase (397 aa).

Residues G34, Y66, W131, and N184 each coordinate substrate. At K247 the chain carries N6-(pyridoxal phosphate)lysine. Residues R281 and R375 each contribute to the substrate site.

This sequence belongs to the class-I pyridoxal-phosphate-dependent aminotransferase family. As to quaternary structure, homodimer. The cofactor is pyridoxal 5'-phosphate.

The protein resides in the cytoplasm. The enzyme catalyses an aromatic L-alpha-amino acid + 2-oxoglutarate = an aromatic oxo-acid + L-glutamate. It carries out the reaction (3S)-3-methyl-L-phenylalanine + 2-oxoglutarate = (3S)-2-oxo-3-phenylbutanoate + L-glutamate. It functions in the pathway amino-acid biosynthesis; L-phenylalanine biosynthesis; L-phenylalanine from phenylpyruvate (ArAT route): step 1/1. Its pathway is amino-acid biosynthesis; L-tyrosine biosynthesis; L-tyrosine from (4-hydroxyphenyl)pyruvate: step 1/1. Functionally, broad-specificity enzyme that catalyzes the transamination of 2-ketoisocaproate, p-hydroxyphenylpyruvate, and phenylpyruvate to yield leucine, tyrosine, and phenylalanine, respectively. In vitro, is able to catalyze the conversion of beta-methyl phenylpyruvate to the nonproteinogenic amino acid (2S,3S)-beta-methyl-phenylalanine, a building block of the antibiotic mannopeptimycin produced by Streptomyces hygroscopicus NRRL3085. This is Aromatic-amino-acid aminotransferase (tyrB) from Escherichia coli (strain K12).